The sequence spans 482 residues: Cytochrome P450 monooxygenase pynD (482 aa).

An N-terminal signal peptide occupies residues 1-22; the sequence is MWRIPVIVALVAGLLYWVRKQG. An N-linked (GlcNAc...) asparagine glycan is attached at Asn-401. Cys-417 is a binding site for heme.

The protein belongs to the cytochrome P450 family. Heme serves as cofactor.

The protein operates within secondary metabolite biosynthesis. Cytochrome P450 monooxygenase; part of the gene cluster that mediates the biosynthesis of pyranonigrins, a family of antioxidative compounds. The first step of pyranonigrins biosynthesis is performed by the hybrid PKS-NRPS synthetase that condenses 6 malonyl-CoA units to an acetyl starter unit, to form a 1,3,5-trioxotetradecane-6,8-dienyl-ACP. The enoyl reductase (ER) domain of pynA is likely to be functional during the first two rounds of polyketide chain extension, to generate the saturated C-C bonds of the alkyl side chain. PynA subsequently forms the amide bond between the acyl chain and L-serine. Although pynA has a terminal reductase domain, it appears to require the thioesterase pynI for the release of the straight-chain intermediate from pynA via the formation of a tetramic acid pyranonigrin J. The methyltransferase pynC then coverts pyranonigrin J to pyranonigrin I via N-methylation. The FAD-dependent monooxygenase pynG catalyzes an epoxidation-mediated cyclization to form the dihydro-gamma-pyrone moiety, followed by pynD-catalyzed oxidation of the alcohol to the ketone and enolization to yield the characteristic tetramic acid-fused gamma-pyrone core of pyranonigrin H. Pyranonigrin H is substrate of pynH for dehydration-mediated exo-methylene formation from the serine side chain to produce pyranonigrin E, before the oxidase pynE reduces the exo-methylene of pyranonigrin E into a pendant methyl to form pyranonigrin G. The FAD-linked oxidoreductase pynB performs the reverse reaction and converts pyranonigrin G back to pyranonigrin E. The sequence is that of Cytochrome P450 monooxygenase pynD from Aspergillus niger (strain ATCC MYA-4892 / CBS 513.88 / FGSC A1513).